The following is a 784-amino-acid chain: Cadherin-15 (784 aa).

Positions 1–21 (MGSALLLALGLLAQSLGLSWA) are cleaved as a signal peptide. Residues 22 to 59 (VPEPKPSTLYPWRRASAPGRVRRAWVIPPISVSENHKR) constitute a propeptide that is removed on maturation. 5 consecutive Cadherin domains span residues 60–151 (LPYP…RPAF), 152–259 (LQDV…APEF), 260–374 (TKDE…APVF), 375–480 (PENP…DHAP), and 481–589 (ALAL…TCLP). The Extracellular segment spans residues 60–605 (LPYPLVQIKS…GGGVGVSLGA (546 aa)). 2 N-linked (GlcNAc...) asparagine glycosylation sites follow: asparagine 106 and asparagine 226. N-linked (GlcNAc...) asparagine glycosylation is found at asparagine 530, asparagine 537, and asparagine 575. Residues 606–625 (LVIVLASTVVLLVLILLAAL) form a helical membrane-spanning segment. Residues 626–784 (RTRFRGHSRG…ARLADMYGHQ (159 aa)) lie on the Cytoplasmic side of the membrane. Positions 676–700 (EPRATSRSLGRPPLRRDAPFSYVPQ) are disordered.

As to expression, skeletal muscle.

It is found in the cell membrane. Functionally, cadherins are calcium-dependent cell adhesion proteins. They preferentially interact with themselves in a homophilic manner in connecting cells; cadherins may thus contribute to the sorting of heterogeneous cell types. M-cadherin is part of the myogenic program and may provide a trigger for terminal muscle differentiation. This chain is Cadherin-15 (Cdh15), found in Mus musculus (Mouse).